A 591-amino-acid polypeptide reads, in one-letter code: L-fucose isomerase (591 aa).

Residues Glu-337 and Asp-361 each act as proton acceptor in the active site. The Mn(2+) site is built by Glu-337, Asp-361, and His-528.

The protein belongs to the L-fucose isomerase family. Homohexamer. Requires Mn(2+) as cofactor.

The protein localises to the cytoplasm. The catalysed reaction is L-fucose = L-fuculose. It functions in the pathway carbohydrate degradation; L-fucose degradation; L-lactaldehyde and glycerone phosphate from L-fucose: step 1/3. In terms of biological role, converts the aldose L-fucose into the corresponding ketose L-fuculose. The polypeptide is L-fucose isomerase (Salmonella paratyphi B (strain ATCC BAA-1250 / SPB7)).